Consider the following 443-residue polypeptide: Phosphomevalonate kinase ERG8 (443 aa).

160-170 contributes to the ATP binding site; it reads ANKTGLGSSAA.

This sequence belongs to the GHMP kinase family. Mevalonate kinase subfamily.

The enzyme catalyses (R)-5-phosphomevalonate + ATP = (R)-5-diphosphomevalonate + ADP. Its pathway is isoprenoid biosynthesis; isopentenyl diphosphate biosynthesis via mevalonate pathway; isopentenyl diphosphate from (R)-mevalonate: step 2/3. In terms of biological role, phosphomevalonate kinase; part of the second module of ergosterol biosynthesis pathway that includes the middle steps of the pathway. ERG8 converts 5-phosphomevalonate to 5-diphosphomevalonate. The second module is carried out in the vacuole and involves the formation of farnesyl diphosphate, which is also an important intermediate in the biosynthesis of ubiquinone, dolichol, heme and prenylated proteins. Activity by the mevalonate kinase ERG12 (FG05912) first converts mevalonate into 5-phosphomevalonate. 5-phosphomevalonate is then further converted to 5-diphosphomevalonate by the phosphomevalonate kinase ERG8 (FG09764). The diphosphomevalonate decarboxylase ERG19 (FG10424) then produces isopentenyl diphosphate. The isopentenyl-diphosphate delta-isomerase IDI1 (FG09722) then catalyzes the 1,3-allylic rearrangement of the homoallylic substrate isopentenyl (IPP) to its highly electrophilic allylic isomer, dimethylallyl diphosphate (DMAPP). Finally the farnesyl diphosphate synthase ERG20 (FG06784) catalyzes the sequential condensation of isopentenyl pyrophosphate with dimethylallyl pyrophosphate, and then with the resultant geranylpyrophosphate to the ultimate product farnesyl pyrophosphate. This is Phosphomevalonate kinase ERG8 from Gibberella zeae (strain ATCC MYA-4620 / CBS 123657 / FGSC 9075 / NRRL 31084 / PH-1) (Wheat head blight fungus).